The following is an 819-amino-acid chain: Molybdenum cofactor sulfurase (819 aa).

K271 carries the N6-(pyridoxal phosphate)lysine modification. C430 is an active-site residue. Residues 650–817 (CKLLRYSSST…IGVGEEVNPD (168 aa)) enclose the MOSC domain.

It belongs to the class-V pyridoxal-phosphate-dependent aminotransferase family. MOCOS subfamily. Pyridoxal 5'-phosphate serves as cofactor. As to expression, ubiquitously expressed.

It carries out the reaction Mo-molybdopterin + L-cysteine + AH2 = thio-Mo-molybdopterin + L-alanine + A + H2O. It functions in the pathway cofactor biosynthesis; molybdopterin biosynthesis. Sulfurates the molybdenum cofactor. Sulfation of molybdenum is essential for xanthine dehydrogenase (XDH) and aldehyde oxidase (ADO) enzymes in which molybdenum cofactor is liganded by 1 oxygen and 1 sulfur atom in active form. Modulates cold stress- and osmotic stress-responsive gene expression by acting as key regulator of abscisic acid (ABA) biosynthesis. In Arabidopsis thaliana (Mouse-ear cress), this protein is Molybdenum cofactor sulfurase (ABA3).